The chain runs to 247 residues: Capsid protein (247 aa).

Residues 1–28 carry the Bipartite nuclear localization signal motif; the sequence is MSGALKRKRSDEVAWSRRRPVKKPVRRA. A disordered region spans residues 1-39; sequence MSGALKRKRSDEVAWSRRRPVKKPVRRAPPPRAGPSVRR. Residues 16-26 are compositionally biased toward basic residues; sequence SRRRPVKKPVR.

This sequence belongs to the geminiviridae capsid protein family. In terms of assembly, homomultimer. Interacts with the movement protein. Binds to single-stranded and double-stranded viral DNA.

The protein resides in the virion. It localises to the host nucleus. In terms of biological role, encapsidates the viral genome into characteristic twinned ('geminate') particles. Binds the genomic viral ssDNA and shuttles it into and out of the cell nucleus. Plays a role in protection of the genome from degradation, virus acquisition and transmission by insect vectors, infectivity, and systemic movement. The CP of monopartite geminiviruses is absolutely essential for virus movement. This Megathyrsus maximus (PanSV) protein is Capsid protein.